The sequence spans 491 residues: Ran-binding protein 3-like (491 aa).

Residues 270 to 441 (TFKSVLKFPN…VALRSLAKQG (172 aa)) form the RanBD1 domain. The interval 440–468 (QGDGGPAESQSDTALPQLNGESCDEDEDE) is disordered. Positions 447–459 (ESQSDTALPQLNG) are enriched in polar residues.

As to quaternary structure, interacts with SMAD1, SMAD5 and SMAD8.

The protein resides in the nucleus. Its subcellular location is the cytoplasm. Functionally, nuclear export factor for BMP-specific SMAD1/5/8 that plays a critical role in terminating BMP signaling and regulating mesenchymal stem cell differentiation by blocking osteoblast differentiation to promote myogenic differention. Directly recognizes dephosphorylated SMAD1/5/8 and mediates their nuclear export in a Ran-dependent manner. In Mus musculus (Mouse), this protein is Ran-binding protein 3-like (Ranbp3l).